The chain runs to 301 residues: GTPase Era (301 aa).

The Era-type G domain maps to 11-180; that stretch reads RSGIITLVGR…KDVFFENCLN (170 aa). A G1 region spans residues 19–26; that stretch reads GRPNVGKS. 19-26 lines the GTP pocket; it reads GRPNVGKS. Residues 45-49 form a G2 region; it reads QTTRR. The interval 66–69 is G3; sequence DTPG. Residues 66 to 70 and 129 to 132 each bind GTP; these read DTPGI and TKID. A G4 region spans residues 129 to 132; the sequence is TKID. Residues 159–161 form a G5 region; it reads VSA. The KH type-2 domain occupies 210–286; that stretch reads LEQEIPHSLL…YLRLIVKVVK (77 aa).

It belongs to the TRAFAC class TrmE-Era-EngA-EngB-Septin-like GTPase superfamily. Era GTPase family. As to quaternary structure, monomer.

It is found in the cytoplasm. The protein resides in the cell membrane. Functionally, an essential GTPase that binds both GDP and GTP, with rapid nucleotide exchange. Plays a role in 16S rRNA processing and 30S ribosomal subunit biogenesis and possibly also in cell cycle regulation and energy metabolism. The polypeptide is GTPase Era (Tropheryma whipplei (strain TW08/27) (Whipple's bacillus)).